Reading from the N-terminus, the 491-residue chain is Aspartyl/glutamyl-tRNA(Asn/Gln) amidotransferase subunit B (491 aa).

This sequence belongs to the GatB/GatE family. GatB subfamily. As to quaternary structure, heterotrimer of A, B and C subunits.

It carries out the reaction L-glutamyl-tRNA(Gln) + L-glutamine + ATP + H2O = L-glutaminyl-tRNA(Gln) + L-glutamate + ADP + phosphate + H(+). The enzyme catalyses L-aspartyl-tRNA(Asn) + L-glutamine + ATP + H2O = L-asparaginyl-tRNA(Asn) + L-glutamate + ADP + phosphate + 2 H(+). In terms of biological role, allows the formation of correctly charged Asn-tRNA(Asn) or Gln-tRNA(Gln) through the transamidation of misacylated Asp-tRNA(Asn) or Glu-tRNA(Gln) in organisms which lack either or both of asparaginyl-tRNA or glutaminyl-tRNA synthetases. The reaction takes place in the presence of glutamine and ATP through an activated phospho-Asp-tRNA(Asn) or phospho-Glu-tRNA(Gln). This is Aspartyl/glutamyl-tRNA(Asn/Gln) amidotransferase subunit B from Burkholderia multivorans (strain ATCC 17616 / 249).